Consider the following 105-residue polypeptide: Co-chaperonin GroES (105 aa).

This sequence belongs to the GroES chaperonin family. As to quaternary structure, heptamer of 7 subunits arranged in a ring. Interacts with the chaperonin GroEL.

It is found in the cytoplasm. Functionally, together with the chaperonin GroEL, plays an essential role in assisting protein folding. The GroEL-GroES system forms a nano-cage that allows encapsulation of the non-native substrate proteins and provides a physical environment optimized to promote and accelerate protein folding. GroES binds to the apical surface of the GroEL ring, thereby capping the opening of the GroEL channel. In Parvibaculum lavamentivorans (strain DS-1 / DSM 13023 / NCIMB 13966), this protein is Co-chaperonin GroES.